An 828-amino-acid chain; its full sequence is Phenylalanine--tRNA ligase beta subunit (828 aa).

The tRNA-binding domain maps to 44-155 (GPVDGPLTVG…GTAEPGADGA (112 aa)). Residues 411–486 (WSPPAIQMPA…RLEGLEVIGS (76 aa)) form the B5 domain. Mg(2+) is bound by residues Asp-464, Asp-470, Glu-473, and Glu-474. An FDX-ACB domain is found at 734-827 (SPFPAVFQDV…AAEAVGAELR (94 aa)).

This sequence belongs to the phenylalanyl-tRNA synthetase beta subunit family. Type 1 subfamily. In terms of assembly, tetramer of two alpha and two beta subunits. Mg(2+) serves as cofactor.

Its subcellular location is the cytoplasm. The catalysed reaction is tRNA(Phe) + L-phenylalanine + ATP = L-phenylalanyl-tRNA(Phe) + AMP + diphosphate + H(+). In Mycolicibacterium paratuberculosis (strain ATCC BAA-968 / K-10) (Mycobacterium paratuberculosis), this protein is Phenylalanine--tRNA ligase beta subunit.